The primary structure comprises 352 residues: Putative hetero-Diels-Alderase (352 aa).

Residues 1–20 (MRYHLSALVLVFTAFRETLT) form the signal peptide. N-linked (GlcNAc...) asparagine glycosylation is found at N26, N41, N47, N135, N211, and N310.

The protein belongs to the eupF Diels-Alderase family.

Its pathway is secondary metabolite biosynthesis; terpenoid biosynthesis. In terms of biological role, putative hetero-Diels-Alderase; part of the gene cluster that mediates the biosynthesis of eupenifeldin, a bistropolone meroterpenoid that acts as an antitumor agent. The first step of eupenifeldin biosynthesis is the biosynthesis of 3-methylorcinaldehyde performed by the non-reducing polyketide synthase eupA. Oxidative dearomatization of 3-methylorcinaldehyde likely catalyzed by the FAD-dependent monooxygenase eupB is followed by oxidative ring expansion by the 2-oxoglutarate-dependent dioxygenase eupC to provide the first tropolone metabolite, tropolone stipitaldehyde. In parallel, generation of sesquiterpene alpha-humulene from farnesylpyrophosphate (FPP) is catalyzed by the terpene cyclase eupE. The cytochrome P450 monooxygenase eupD then hydroxylates humulene to humulenol. The putative Diels-Alderase eupF probably catalyzes the formation of the tropolone-humulene skeleton by linking humulenol and the polyketide moiety. The short-chain dehydrogenase/reductase eupG and the flavin-dependent monooxygenase eupH are also essential for eupenifeldin biosynthesis and are likely the additional decorating enzymes of the tropolone-humulene skeleton to produce final eupenifeldin or derivatives. The protein is Putative hetero-Diels-Alderase of Phoma sp.